The sequence spans 503 residues: Cobyric acid synthase (503 aa).

The GATase cobBQ-type domain occupies 255 to 444 (AIDVAVIRCP…MHDLFHNDAF (190 aa)). Cys337 functions as the Nucleophile in the catalytic mechanism. His436 is a catalytic residue.

This sequence belongs to the CobB/CobQ family. CobQ subfamily.

It participates in cofactor biosynthesis; adenosylcobalamin biosynthesis. Catalyzes amidations at positions B, D, E, and G on adenosylcobyrinic A,C-diamide. NH(2) groups are provided by glutamine, and one molecule of ATP is hydrogenolyzed for each amidation. The sequence is that of Cobyric acid synthase from Geobacillus kaustophilus (strain HTA426).